We begin with the raw amino-acid sequence, 423 residues long: Polyglutamylase complex subunit TTLL1 (423 aa).

The TTL domain maps to 1–367; that stretch reads MAGKVKWVTD…NGEIPDCKWN (367 aa). Residues Lys-138, 144–145, 181–184, and 194–196 contribute to the ATP site; these read QG, SLYI, and KFD. An a protein-binding site is contributed by Gln-144. Position 220 (Arg-220) interacts with L-glutamate. Residue 241–242 coordinates ATP; that stretch reads TN. An L-glutamate-binding site is contributed by Lys-259. Mg(2+) is bound by residues Asp-313, Glu-326, and Asn-328. Lys-344 contributes to the L-glutamate binding site. Residues 391–423 form a disordered region; the sequence is GAERELRSRPGQSLGPKGSRLRDAGRTVLTTWK.

It belongs to the tubulin polyglutamylase family. In terms of assembly, part of the neuronal tubulin polyglutamylase complex which contains TPGS1, TPGS2, TTLL1, LRRC49 and NICN1. Interacts with PCM1, CSTPP1 and LRRC49. The cofactor is Mg(2+).

The protein localises to the cytoplasm. The protein resides in the cytoskeleton. It is found in the cilium basal body. Its subcellular location is the cilium axoneme. It localises to the cell projection. The protein localises to the cilium. The protein resides in the flagellum. It catalyses the reaction (L-glutamyl)(n)-gamma-L-glutamyl-L-glutamyl-[protein] + L-glutamate + ATP = (L-glutamyl)(n+1)-gamma-L-glutamyl-L-glutamyl-[protein] + ADP + phosphate + H(+). In terms of biological role, catalytic subunit of a polyglutamylase complex which modifies tubulin, generating side chains of glutamate on the gamma-carboxyl group of specific glutamate residues within the C-terminal tail of tubulin. Probably involved in the side-chain elongation step of the polyglutamylation reaction rather than the initiation step. Modifies both alpha- and beta-tubulins with a preference for the alpha-tail. Unlike most polyglutamylases of the tubulin--tyrosine ligase family, only displays a catalytic activity when in complex with other proteins as it is most likely lacking domains important for autonomous activity. Part of the neuronal tubulin polyglutamylase complex. Mediates cilia and flagella polyglutamylation which is essential for their biogenesis and motility. Involved in respiratory motile cilia function through the regulation of beating asymmetry. Essential for sperm flagella biogenesis, motility and male fertility. Involved in KLF4 glutamylation which impedes its ubiquitination, thereby leading to somatic cell reprogramming, pluripotency maintenance and embryogenesis. This Bos taurus (Bovine) protein is Polyglutamylase complex subunit TTLL1 (TTLL1).